The chain runs to 60 residues: UPF0434 protein PC1_1771 (60 aa).

This sequence belongs to the UPF0434 family.

This is UPF0434 protein PC1_1771 from Pectobacterium carotovorum subsp. carotovorum (strain PC1).